The sequence spans 438 residues: UPF0597 protein YE0448 (438 aa).

Belongs to the UPF0597 family.

The polypeptide is UPF0597 protein YE0448 (Yersinia enterocolitica serotype O:8 / biotype 1B (strain NCTC 13174 / 8081)).